Consider the following 229-residue polypeptide: NAD-dependent protein deacylase (229 aa).

A Deacetylase sirtuin-type domain is found at 1 to 227 (MKNLVILSGA…QDLMPKLIEM (227 aa)). An NAD(+)-binding site is contributed by 9 to 28 (GAGISAESGIKTFRDADGLW). The substrate site is built by tyrosine 53 and arginine 56. 86 to 89 (QNVD) provides a ligand contact to NAD(+). The active-site Proton acceptor is histidine 104. 169–171 (GTS) contributes to the NAD(+) binding site.

The protein belongs to the sirtuin family. Class III subfamily.

The protein resides in the cytoplasm. The catalysed reaction is N(6)-acetyl-L-lysyl-[protein] + NAD(+) + H2O = 2''-O-acetyl-ADP-D-ribose + nicotinamide + L-lysyl-[protein]. The enzyme catalyses N(6)-succinyl-L-lysyl-[protein] + NAD(+) + H2O = 2''-O-succinyl-ADP-D-ribose + nicotinamide + L-lysyl-[protein]. In terms of biological role, NAD-dependent lysine deacetylase and desuccinylase that specifically removes acetyl and succinyl groups on target proteins. Modulates the activities of several proteins which are inactive in their acylated form. The sequence is that of NAD-dependent protein deacylase from Helicobacter pylori (strain ATCC 700392 / 26695) (Campylobacter pylori).